Here is a 133-residue protein sequence, read N- to C-terminus: Ribonuclease VapC1 (133 aa).

Residues D7 and D98 each contribute to the Mg(2+) site.

Belongs to the PINc/VapC protein family. Requires Mg(2+) as cofactor.

Functionally, toxic component of a type II toxin-antitoxin (TA) system. The cognate antitoxin is VapB1. This is Ribonuclease VapC1 from Mycobacterium tuberculosis (strain CDC 1551 / Oshkosh).